We begin with the raw amino-acid sequence, 513 residues long: ATP synthase subunit alpha (513 aa).

169-176 contacts ATP; it reads GDRQTGKT.

This sequence belongs to the ATPase alpha/beta chains family. In terms of assembly, F-type ATPases have 2 components, CF(1) - the catalytic core - and CF(0) - the membrane proton channel. CF(1) has five subunits: alpha(3), beta(3), gamma(1), delta(1), epsilon(1). CF(0) has three main subunits: a(1), b(2) and c(9-12). The alpha and beta chains form an alternating ring which encloses part of the gamma chain. CF(1) is attached to CF(0) by a central stalk formed by the gamma and epsilon chains, while a peripheral stalk is formed by the delta and b chains.

It localises to the cell inner membrane. The catalysed reaction is ATP + H2O + 4 H(+)(in) = ADP + phosphate + 5 H(+)(out). Produces ATP from ADP in the presence of a proton gradient across the membrane. The alpha chain is a regulatory subunit. The polypeptide is ATP synthase subunit alpha (Edwardsiella ictaluri (strain 93-146)).